A 395-amino-acid polypeptide reads, in one-letter code: Tryptophan--tRNA ligase, cytoplasmic (395 aa).

The short motif at 91-100 is the 'HIGH' region element; sequence PSSDSMHLGH. The 'KMSKS' region signature appears at 275–279; sequence KMSAS. 2 positions are modified to phosphothreonine: T288 and T290.

This sequence belongs to the class-I aminoacyl-tRNA synthetase family.

It localises to the cytoplasm. The enzyme catalyses tRNA(Trp) + L-tryptophan + ATP = L-tryptophyl-tRNA(Trp) + AMP + diphosphate + H(+). This Schizosaccharomyces pombe (strain 972 / ATCC 24843) (Fission yeast) protein is Tryptophan--tRNA ligase, cytoplasmic (wrs1).